A 681-amino-acid chain; its full sequence is DNA ligase (681 aa).

Residues 32 to 36 (DIEYD), 81 to 82 (SL), and Glu-113 each bind NAD(+). Lys-115 (N6-AMP-lysine intermediate) is an active-site residue. Arg-136, Glu-173, Lys-290, and Lys-314 together coordinate NAD(+). Zn(2+) is bound by residues Cys-408, Cys-411, Cys-426, and Cys-432. A BRCT domain is found at 596-681 (EIDSPFAGKT…LNNHGDVSTL (86 aa)).

The protein belongs to the NAD-dependent DNA ligase family. LigA subfamily. Requires Mg(2+) as cofactor. It depends on Mn(2+) as a cofactor.

It catalyses the reaction NAD(+) + (deoxyribonucleotide)n-3'-hydroxyl + 5'-phospho-(deoxyribonucleotide)m = (deoxyribonucleotide)n+m + AMP + beta-nicotinamide D-nucleotide.. Its function is as follows. DNA ligase that catalyzes the formation of phosphodiester linkages between 5'-phosphoryl and 3'-hydroxyl groups in double-stranded DNA using NAD as a coenzyme and as the energy source for the reaction. It is essential for DNA replication and repair of damaged DNA. The polypeptide is DNA ligase (Pectobacterium atrosepticum (strain SCRI 1043 / ATCC BAA-672) (Erwinia carotovora subsp. atroseptica)).